Consider the following 62-residue polypeptide: Short neurotoxin A (62 aa).

Residues 1-16 (RRCFNHPSSQPQTNKS) show a composition bias toward polar residues. The tract at residues 1 to 21 (RRCFNHPSSQPQTNKSCPPGE) is disordered. 4 disulfide bridges follow: Cys3–Cys24, Cys17–Cys41, Cys43–Cys54, and Cys55–Cys60.

The protein belongs to the three-finger toxin family. Short-chain subfamily. Type I alpha-neurotoxin sub-subfamily. Expressed by the venom gland.

The protein resides in the secreted. In terms of biological role, binds to muscle nicotinic acetylcholine receptor (nAChR) and inhibit acetylcholine from binding to the receptor, thereby impairing neuromuscular transmission. This is Short neurotoxin A from Laticauda crockeri (Crocker's sea snake).